The chain runs to 276 residues: Small ribosomal subunit protein uS2 (276 aa).

Residues 254–276 (LAGATAAAPAEGAVATETTPTEG) are disordered. A compositionally biased stretch (low complexity) spans 255–276 (AGATAAAPAEGAVATETTPTEG).

It belongs to the universal ribosomal protein uS2 family.

This Mycobacterium ulcerans (strain Agy99) protein is Small ribosomal subunit protein uS2.